Consider the following 299-residue polypeptide: Regucalcin (299 aa).

Residue glutamate 18 coordinates a divalent metal cation. Residues arginine 101, asparagine 103, and glutamate 121 each coordinate substrate. Lysine 144 carries the post-translational modification N6-succinyllysine. 2 residues coordinate a divalent metal cation: asparagine 154 and aspartate 204. The Proton donor/acceptor role is filled by aspartate 204. N6-succinyllysine occurs at positions 244 and 253.

This sequence belongs to the SMP-30/CGR1 family. In terms of assembly, monomer. Requires Zn(2+) as cofactor. Mn(2+) serves as cofactor. Ca(2+) is required as a cofactor. The cofactor is Mg(2+).

Its subcellular location is the cytoplasm. It catalyses the reaction D-glucono-1,5-lactone + H2O = D-gluconate + H(+). It functions in the pathway cofactor biosynthesis; L-ascorbate biosynthesis via UDP-alpha-D-glucuronate pathway; L-ascorbate from UDP-alpha-D-glucuronate: step 3/4. Functionally, gluconolactonase with low activity towards other sugar lactones, including gulonolactone and galactonolactone. Catalyzes a key step in ascorbic acid (vitamin C) biosynthesis. Can also hydrolyze diisopropyl phosphorofluoridate and phenylacetate (in vitro). Calcium-binding protein. Modulates Ca(2+) signaling, and Ca(2+)-dependent cellular processes and enzyme activities. The chain is Regucalcin (RGN) from Oryctolagus cuniculus (Rabbit).